A 305-amino-acid chain; its full sequence is tRNA pseudouridine synthase B (305 aa).

Catalysis depends on aspartate 41, which acts as the Nucleophile.

The protein belongs to the pseudouridine synthase TruB family. Type 1 subfamily.

It carries out the reaction uridine(55) in tRNA = pseudouridine(55) in tRNA. Its function is as follows. Responsible for synthesis of pseudouridine from uracil-55 in the psi GC loop of transfer RNAs. The chain is tRNA pseudouridine synthase B from Prochlorococcus marinus (strain MIT 9301).